A 159-amino-acid polypeptide reads, in one-letter code: SsrA-binding protein (159 aa).

Belongs to the SmpB family.

The protein resides in the cytoplasm. In terms of biological role, required for rescue of stalled ribosomes mediated by trans-translation. Binds to transfer-messenger RNA (tmRNA), required for stable association of tmRNA with ribosomes. tmRNA and SmpB together mimic tRNA shape, replacing the anticodon stem-loop with SmpB. tmRNA is encoded by the ssrA gene; the 2 termini fold to resemble tRNA(Ala) and it encodes a 'tag peptide', a short internal open reading frame. During trans-translation Ala-aminoacylated tmRNA acts like a tRNA, entering the A-site of stalled ribosomes, displacing the stalled mRNA. The ribosome then switches to translate the ORF on the tmRNA; the nascent peptide is terminated with the 'tag peptide' encoded by the tmRNA and targeted for degradation. The ribosome is freed to recommence translation, which seems to be the essential function of trans-translation. This Coxiella burnetii (strain RSA 493 / Nine Mile phase I) protein is SsrA-binding protein.